Consider the following 277-residue polypeptide: Shikimate dehydrogenase (NADP(+)) (277 aa).

Residues 15–17 (SLS) and Thr-62 contribute to the shikimate site. Lys-66 (proton acceptor) is an active-site residue. 2 residues coordinate shikimate: Asn-87 and Asp-102. NADP(+)-binding positions include 127-131 (GSGGA), 151-156 (NRTVDK), and Ile-219. Tyr-221 contributes to the shikimate binding site. Position 242 (Gly-242) interacts with NADP(+).

This sequence belongs to the shikimate dehydrogenase family. Homodimer.

The catalysed reaction is shikimate + NADP(+) = 3-dehydroshikimate + NADPH + H(+). Its pathway is metabolic intermediate biosynthesis; chorismate biosynthesis; chorismate from D-erythrose 4-phosphate and phosphoenolpyruvate: step 4/7. Involved in the biosynthesis of the chorismate, which leads to the biosynthesis of aromatic amino acids. Catalyzes the reversible NADPH linked reduction of 3-dehydroshikimate (DHSA) to yield shikimate (SA). This chain is Shikimate dehydrogenase (NADP(+)), found in Bacillus cereus (strain B4264).